Consider the following 651-residue polypeptide: UvrABC system protein B (651 aa).

Residues 25 to 178 form the Helicase ATP-binding domain; that stretch reads RGISCGAKEQ…CQLQERLVEL (154 aa). An ATP-binding site is contributed by 38 to 45; it reads GVTGSGKT. The Beta-hairpin motif lies at 91–114; sequence YYDYYQPEAYIPQSDVYIEKDALI. The Helicase C-terminal domain maps to 427–591; that stretch reads DGQIHDVMCE…IVPRTIQKPV (165 aa). The disordered stretch occupies residues 593-615; it reads TSLSERVGSSRKKVSRDTNTDPA. The UVR domain maps to 616-651; that stretch reads NRDIVELQKEMLLCAENLDFERAVEIRNEIKRLTAP.

The protein belongs to the UvrB family. In terms of assembly, forms a heterotetramer with UvrA during the search for lesions. Interacts with UvrC in an incision complex.

Its subcellular location is the cytoplasm. Functionally, the UvrABC repair system catalyzes the recognition and processing of DNA lesions. A damage recognition complex composed of 2 UvrA and 2 UvrB subunits scans DNA for abnormalities. Upon binding of the UvrA(2)B(2) complex to a putative damaged site, the DNA wraps around one UvrB monomer. DNA wrap is dependent on ATP binding by UvrB and probably causes local melting of the DNA helix, facilitating insertion of UvrB beta-hairpin between the DNA strands. Then UvrB probes one DNA strand for the presence of a lesion. If a lesion is found the UvrA subunits dissociate and the UvrB-DNA preincision complex is formed. This complex is subsequently bound by UvrC and the second UvrB is released. If no lesion is found, the DNA wraps around the other UvrB subunit that will check the other stand for damage. This is UvrABC system protein B from Anaplasma marginale (strain Florida).